Consider the following 116-residue polypeptide: Small ribosomal subunit protein uS13 (116 aa).

The segment at 92–116 is disordered; the sequence is RRGLPVRGQNTKNNARTRKGAKRSR. The segment covering 106-116 has biased composition (basic residues); the sequence is ARTRKGAKRSR.

This sequence belongs to the universal ribosomal protein uS13 family. As to quaternary structure, part of the 30S ribosomal subunit. Forms a loose heterodimer with protein S19. Forms two bridges to the 50S subunit in the 70S ribosome.

Located at the top of the head of the 30S subunit, it contacts several helices of the 16S rRNA. In the 70S ribosome it contacts the 23S rRNA (bridge B1a) and protein L5 of the 50S subunit (bridge B1b), connecting the 2 subunits; these bridges are implicated in subunit movement. Contacts the tRNAs in the A and P-sites. This chain is Small ribosomal subunit protein uS13, found in Lactobacillus delbrueckii subsp. bulgaricus (strain ATCC 11842 / DSM 20081 / BCRC 10696 / JCM 1002 / NBRC 13953 / NCIMB 11778 / NCTC 12712 / WDCM 00102 / Lb 14).